A 420-amino-acid chain; its full sequence is Histidine--tRNA ligase (420 aa).

It belongs to the class-II aminoacyl-tRNA synthetase family. Homodimer.

The protein localises to the cytoplasm. It carries out the reaction tRNA(His) + L-histidine + ATP = L-histidyl-tRNA(His) + AMP + diphosphate + H(+). This is Histidine--tRNA ligase from Thermodesulfovibrio yellowstonii (strain ATCC 51303 / DSM 11347 / YP87).